Here is a 561-residue protein sequence, read N- to C-terminus: 4-coumarate--CoA ligase 3 (561 aa).

Residues S213, S214, G215, T216, T217, and K221 each coordinate ATP. Y263 and S267 together coordinate (E)-4-coumaroyl-AMP. K284 contributes to the CoA binding site. The segment at 286 to 355 (EIGALLDLIQ…RRLPQAILGQ (70 aa)) is SBD1. A333, Q355, G356, T360, and M368 together coordinate (E)-4-coumaroyl-AMP. ATP contacts are provided by Q355, G356, and T360. The segment at 356-423 (GYGMTEAGPV…IRGQQIMKEY (68 aa)) is SBD2. ATP-binding residues include D444 and R459. (E)-4-coumaroyl-AMP is bound by residues K461 and K465. Residues K467 and G468 each contribute to the CoA site. K550 is an ATP binding site.

The protein belongs to the ATP-dependent AMP-binding enzyme family. The cofactor is Mg(2+). As to expression, preferentially expressed in leaves, flowers and siliques.

The catalysed reaction is (E)-4-coumarate + ATP + CoA = (E)-4-coumaroyl-CoA + AMP + diphosphate. The enzyme catalyses (E)-caffeate + ATP + CoA = (E)-caffeoyl-CoA + AMP + diphosphate. It catalyses the reaction (E)-ferulate + ATP + CoA = (E)-feruloyl-CoA + AMP + diphosphate. It carries out the reaction (E)-4-coumarate + ATP + H(+) = (E)-4-coumaroyl-AMP + diphosphate. The catalysed reaction is (E)-4-coumaroyl-AMP + CoA = (E)-4-coumaroyl-CoA + AMP + H(+). The enzyme catalyses (E)-caffeate + ATP + H(+) = (E)-caffeoyl-AMP + diphosphate. It catalyses the reaction (E)-caffeoyl-AMP + CoA = (E)-caffeoyl-CoA + AMP + H(+). It carries out the reaction (E)-ferulate + ATP + H(+) = (E)-feruloyl-AMP + diphosphate. The catalysed reaction is (E)-feruloyl-AMP + CoA = (E)-feruloyl-CoA + AMP + H(+). Its pathway is phytoalexin biosynthesis; 3,4',5-trihydroxystilbene biosynthesis; 3,4',5-trihydroxystilbene from trans-4-coumarate: step 1/2. Functionally, produces CoA thioesters of a variety of hydroxy- and methoxy-substituted cinnamic acids, which are used to synthesize several phenylpropanoid-derived compounds, including anthocyanins, flavonoids, isoflavonoids, coumarins, lignin, suberin and wall-bound phenolics. Follows a two-step reaction mechanism, wherein the carboxylate substrate first undergoes adenylation by ATP, followed by a thioesterification in the presence of CoA to yield the final CoA thioesters. The chain is 4-coumarate--CoA ligase 3 from Arabidopsis thaliana (Mouse-ear cress).